We begin with the raw amino-acid sequence, 189 residues long: MIKAVIGLGNPGKQYEDTRHNVGFMIADVVASLLKCNKKYIERCFSHIYVCEDHYLLIVKPQTFMNNSGVAVKNLLEDYDLKPDEILVVYDDLDLPLGTVRLRKKGSSGGHRGIQSIIESIKTDEFPRIKVGIGRPERKEQVVDYVLSPFKKEEKILLDKVISHTAQCILNVLKYGIDKSLNLCNKKIV.

Y15 is a tRNA binding site. H20 functions as the Proton acceptor in the catalytic mechanism. F64 and N66 together coordinate tRNA.

The protein belongs to the PTH family. In terms of assembly, monomer.

The protein resides in the cytoplasm. It catalyses the reaction an N-acyl-L-alpha-aminoacyl-tRNA + H2O = an N-acyl-L-amino acid + a tRNA + H(+). In terms of biological role, hydrolyzes ribosome-free peptidyl-tRNAs (with 1 or more amino acids incorporated), which drop off the ribosome during protein synthesis, or as a result of ribosome stalling. Its function is as follows. Catalyzes the release of premature peptidyl moieties from peptidyl-tRNA molecules trapped in stalled 50S ribosomal subunits, and thus maintains levels of free tRNAs and 50S ribosomes. The sequence is that of Peptidyl-tRNA hydrolase from Persephonella marina (strain DSM 14350 / EX-H1).